The sequence spans 946 residues: DDB1- and CUL4-associated factor 5 (946 aa).

6 WD repeats span residues 51 to 91, 99 to 139, 140 to 180, 185 to 225, 277 to 317, and 331 to 370; these read GHFG…HSRV, EHHS…LDVF, AHED…HGEP, NYPS…SSLL, FNSC…EAGG, and GHRS…GCTG. The segment at 449 to 478 is disordered; that stretch reads GVSERSGYTDSESSASLPRSPPPTVDESAD. Residues 454–465 are compositionally biased toward polar residues; that stretch reads SGYTDSESSASL. T500 carries the phosphothreonine modification. Disordered stretches follow at residues 527 to 656, 675 to 860, and 894 to 946; these read LSNE…MESV, SNNK…ELET, and CETP…KLKT. A phosphoserine mark is found at S531 and S533. A compositionally biased stretch (acidic residues) spans 531–544; it reads SDSEENVCEAELDT. Residues 555 to 567 are compositionally biased toward low complexity; sequence PEDGSSSPSSSTS. The span at 579–592 shows a compositional bias: basic residues; it reads ATTRQRNAMRRRQK. The segment covering 625-638 has biased composition (low complexity); it reads LSPSPDSSPERSAS. Phosphoserine occurs at positions 626, 628, and 645. The span at 691–701 shows a compositional bias: basic and acidic residues; that stretch reads EGRAGTSHKDN. Composition is skewed to polar residues over residues 760 to 769 and 808 to 819; these read GTSQDTNNSG and TLNSASGNCPRT.

In terms of assembly, interacts with DDB1, CUL4A or CUL4B. Interacts with L3MBTL3. Interacts with SOX2. Interacts with DNMT1. Interacts with E2F1.

Its pathway is protein modification; protein ubiquitination. In terms of biological role, is a substrate receptor for the CUL4-DDB1 E3 ubiquitin-protein ligase complex (CRL4), involved in the ubiquitination of a set of methylated non-histone proteins, including SOX2. The complex CRL4-DCAF5 is also involved in the ubiquitination of methylated DNMT1 and E2F1. The polypeptide is DDB1- and CUL4-associated factor 5 (Dcaf5) (Mus musculus (Mouse)).